Consider the following 563-residue polypeptide: Arginine--tRNA ligase (563 aa).

The short motif at 121-131 (PNIAKPMSMGH) is the 'HIGH' region element.

The protein belongs to the class-I aminoacyl-tRNA synthetase family. In terms of assembly, monomer.

The protein resides in the cytoplasm. The catalysed reaction is tRNA(Arg) + L-arginine + ATP = L-arginyl-tRNA(Arg) + AMP + diphosphate. The sequence is that of Arginine--tRNA ligase from Leuconostoc citreum (strain KM20).